Consider the following 386-residue polypeptide: Cell division protein FtsZ (386 aa).

Residues Gly-18–Asn-22, Gly-105–Gly-107, Glu-136, Arg-140, and Asp-184 each bind GTP.

The protein belongs to the FtsZ family. As to quaternary structure, homodimer. Polymerizes to form a dynamic ring structure in a strictly GTP-dependent manner. Interacts directly with several other division proteins.

Its subcellular location is the cytoplasm. In terms of biological role, essential cell division protein that forms a contractile ring structure (Z ring) at the future cell division site. The regulation of the ring assembly controls the timing and the location of cell division. One of the functions of the FtsZ ring is to recruit other cell division proteins to the septum to produce a new cell wall between the dividing cells. Binds GTP and shows GTPase activity. This is Cell division protein FtsZ from Mycobacterium kansasii.